A 143-amino-acid chain; its full sequence is MYENKMNLEFVSKSQNEAFARVAVAAFIAQLDPTIDEISDVKTAVSEAVTNSIIHGYENKEDGVIKIEVEICDGEVTIEITDNGKGIEDIPKVMEPLYTSRPDLERSGMGFTVMETFMDGLLVESEKEKGTRVRMKKKFNILS.

The protein belongs to the anti-sigma-factor family.

The catalysed reaction is L-seryl-[protein] + ATP = O-phospho-L-seryl-[protein] + ADP + H(+). The enzyme catalyses L-threonyl-[protein] + ATP = O-phospho-L-threonyl-[protein] + ADP + H(+). In terms of biological role, binds to sigma F and blocks its ability to form an RNA polymerase holoenzyme (E-sigma F). Phosphorylates SpoIIAA on a serine residue. This phosphorylation may enable SpoIIAA to act as an anti-anti-sigma factor that counteracts SpoIIAB and thus releases sigma F from inhibition. The polypeptide is Anti-sigma F factor (Clostridium botulinum (strain Eklund 17B / Type B)).